Consider the following 195-residue polypeptide: Small ribosomal subunit protein uS4 (195 aa).

The S4 RNA-binding domain maps to 92–152; the sequence is SRLDNIVYRL…EKHKHKANKN (61 aa).

It belongs to the universal ribosomal protein uS4 family. Part of the 30S ribosomal subunit. Contacts protein S5. The interaction surface between S4 and S5 is involved in control of translational fidelity.

Its function is as follows. One of the primary rRNA binding proteins, it binds directly to 16S rRNA where it nucleates assembly of the body of the 30S subunit. With S5 and S12 plays an important role in translational accuracy. The chain is Small ribosomal subunit protein uS4 from Karelsulcia muelleri (strain GWSS) (Sulcia muelleri).